A 626-amino-acid chain; its full sequence is Glycosyltransferase 25 family member (626 aa).

Residues 1–21 form the signal peptide; it reads MLKKQVFYGILLICAFVCIYG. Asparagine 113, asparagine 234, asparagine 272, and asparagine 533 each carry an N-linked (GlcNAc...) asparagine glycan. The Prevents secretion from ER motif lies at 623–626; sequence HQEL.

The protein belongs to the glycosyltransferase 25 family.

It localises to the endoplasmic reticulum lumen. The chain is Glycosyltransferase 25 family member from Drosophila pseudoobscura pseudoobscura (Fruit fly).